Consider the following 148-residue polypeptide: MF7 protein (148 aa).

The chain is MF7 protein from Myxoma virus (strain Lausanne) (MYXV).